A 1182-amino-acid chain; its full sequence is Retrotransposable element SLACS 132 kDa protein (1182 aa).

4 disordered regions span residues 77 to 97 (GERS…PRER), 163 to 220 (DVLD…STDQ), 317 to 339 (RRKR…ALRL), and 418 to 478 (RTAR…STAP). Positions 163 to 174 (DVLDEEEQDDDL) are enriched in acidic residues. Residues 420–446 (ARREQQQQRGKDNQEEEDRQKKEEKSL) are compositionally biased toward basic and acidic residues. Residues 456–475 (SVRQGGQPSSSQPKRLNRWS) show a composition bias toward polar residues. Residues 560-790 (NADVSMEVGR…TGDTGFGTAV (231 aa)) enclose the Reverse transcriptase domain.

It carries out the reaction DNA(n) + a 2'-deoxyribonucleoside 5'-triphosphate = DNA(n+1) + diphosphate. The polypeptide is Retrotransposable element SLACS 132 kDa protein (Trypanosoma brucei gambiense).